A 249-amino-acid polypeptide reads, in one-letter code: DNA polymerase sliding clamp (249 aa).

The protein belongs to the PCNA family. As to quaternary structure, homotrimer. The subunits circularize to form a toroid; DNA passes through its center. Replication factor C (RFC) is required to load the toroid on the DNA.

Its function is as follows. Sliding clamp subunit that acts as a moving platform for DNA processing. Responsible for tethering the catalytic subunit of DNA polymerase and other proteins to DNA during high-speed replication. The polypeptide is DNA polymerase sliding clamp (Nanoarchaeum equitans (strain Kin4-M)).